The primary structure comprises 120 residues: Large ribosomal subunit protein eL8 (120 aa).

The protein belongs to the eukaryotic ribosomal protein eL8 family. In terms of assembly, part of the 50S ribosomal subunit. Probably part of the RNase P complex.

Its subcellular location is the cytoplasm. Multifunctional RNA-binding protein that recognizes the K-turn motif in ribosomal RNA, the RNA component of RNase P, box H/ACA, box C/D and box C'/D' sRNAs. This Methanosarcina acetivorans (strain ATCC 35395 / DSM 2834 / JCM 12185 / C2A) protein is Large ribosomal subunit protein eL8.